The sequence spans 30 residues: Cyclotide hypa-A (30 aa).

Residues 1 to 30 constitute a cross-link (cyclopeptide (Gly-Asn)); the sequence is GIPCAESCVYIPCTITALLGCSCKNKVCYN. 3 disulfide bridges follow: C4/C21, C8/C23, and C13/C28.

This is a cyclic peptide.

Functionally, probably participates in a plant defense mechanism. The sequence is that of Cyclotide hypa-A from Pombalia parviflora (Violetilla).